The chain runs to 468 residues: Nuclear distribution protein PAC1-2 (468 aa).

The 33-residue stretch at 13-45 folds into the LisH domain; sequence QAEELHKSIIAYLTSLNLATTANTLRAELNLPE. Residues 66-92 adopt a coiled-coil conformation; the sequence is SVIRLQKKVLDLQAENAHLKNEIENAG. 8 WD repeats span residues 118 to 159, 161 to 201, 205 to 251, 254 to 293, 298 to 358, 360 to 399, 404 to 429, and 430 to 468; these read GHRL…RTLK, HTKA…KNIR, GHDH…CVKT, GHND…PECR, GHEN…IKVL, GHDN…KCVQ, MFDG…GDAG, and DGTP…IFAN.

Belongs to the WD repeat LIS1/nudF family. In terms of assembly, self-associates. Interacts with NDL1 and dynein.

Its subcellular location is the cytoplasm. The protein localises to the cytoskeleton. It is found in the spindle pole. Functionally, positively regulates the activity of the minus-end directed microtubule motor protein dynein. May enhance dynein-mediated microtubule sliding by targeting dynein to the microtubule plus end. Required for nuclear migration during vegetative growth as well as development. Required for retrograde early endosome (EE) transport from the hyphal tip. Required for localization of dynein to the mitotic spindle poles. Recruits additional proteins to the dynein complex at SPBs. The sequence is that of Nuclear distribution protein PAC1-2 from Podospora anserina (strain S / ATCC MYA-4624 / DSM 980 / FGSC 10383) (Pleurage anserina).